Consider the following 395-residue polypeptide: General transcription factor IIH subunit 2-like protein (395 aa).

The 177-residue stretch at 60–236 (HLYVVVDGSR…HYKELLTHHL (177 aa)) folds into the VWFA domain. A Phosphotyrosine modification is found at Tyr-95. A C4-type zinc finger spans residues 291–308 (CPQCRAKYCELPVECKIC).

The protein belongs to the GTF2H2 family.

The protein resides in the nucleus. In terms of biological role, component of the core-TFIIH basal transcription factor involved in nucleotide excision repair (NER) of DNA and, when complexed to CAK, in RNA transcription by RNA polymerase II. The polypeptide is General transcription factor IIH subunit 2-like protein (GTF2H2C) (Homo sapiens (Human)).